Consider the following 338-residue polypeptide: Glutamyl-tRNA reductase (338 aa).

Residues 50 to 53, Ser102, 107 to 109, and Gln113 each bind substrate; these read TCHR and ETE. Cys51 (nucleophile) is an active-site residue. 181-186 serves as a coordination point for NADP(+); the sequence is GYSEIN.

It belongs to the glutamyl-tRNA reductase family. Homodimer.

The catalysed reaction is (S)-4-amino-5-oxopentanoate + tRNA(Glu) + NADP(+) = L-glutamyl-tRNA(Glu) + NADPH + H(+). It functions in the pathway porphyrin-containing compound metabolism; protoporphyrin-IX biosynthesis; 5-aminolevulinate from L-glutamyl-tRNA(Glu): step 1/2. In terms of biological role, catalyzes the NADPH-dependent reduction of glutamyl-tRNA(Glu) to glutamate 1-semialdehyde (GSA). The chain is Glutamyl-tRNA reductase from Chlamydia abortus (strain DSM 27085 / S26/3) (Chlamydophila abortus).